The sequence spans 605 residues: Capsid scaffolding protein (605 aa).

Catalysis depends on charge relay system residues H48, S116, and H139. The tract at residues 235–274 (ASDAPDLQKPDKALQSPPPASTDPATMLSGNAGEGATACG) is disordered. Residues 281 to 300 (QDLISVPRNTFMTLLQTNLD) are interaction with pAP. Disordered stretches follow at residues 403-432 (DYVP…PGED) and 489-588 (PHQS…KSVS). Positions 410-416 (RSNKRKR) match the Nuclear localization signal motif. Polar residues predominate over residues 568-579 (ASASGVAQSKEP). The interval 585-605 (KSVSAHLKSIFCEELLNKRVA) is interaction with major capsid protein.

The protein belongs to the herpesviridae capsid scaffolding protein family. Homomultimer. Interacts with major capsid protein. As to quaternary structure, exists in a monomer-dimer equilibrium with the dimer being the active species. Post-translationally, capsid scaffolding protein is cleaved by assemblin after formation of the spherical procapsid. As a result, the capsid obtains its mature, icosahedral shape. Cleavages occur at two or more sites: release (R-site) and maturation (M-site).

The protein resides in the host cytoplasm. It localises to the host nucleus. It carries out the reaction Cleaves -Ala-|-Ser- and -Ala-|-Ala- bonds in the scaffold protein.. Functionally, acts as a scaffold protein by binding major capsid protein in the cytoplasm, inducing the nuclear localization of both proteins. Multimerizes in the nucleus such as major capsid protein forms the icosahedral T=16 capsid. Autocatalytic cleavage releases the assembly protein, and subsequently abolishes interaction with major capsid protein. Cleavages products are evicted from the capsid before or during DNA packaging. Protease that plays an essential role in virion assembly within the nucleus. Catalyzes the cleavage of the assembly protein after formation of the spherical procapsid. By that cleavage, the capsid matures and gains its icosahedral shape. The cleavage sites seem to include -Ala-Ser-, -Ala-Ala-, as well as Ala-Thr bonds. Assemblin and cleavages products are evicted from the capsid before or during DNA packaging. In terms of biological role, plays a major role in capsid assembly. Acts as a scaffold protein by binding major capsid protein. Multimerizes in the nucleus such as major capsid protein forms the icosahedral T=16 capsid. Cleaved by assemblin after capsid completion. The cleavages products are evicted from the capsid before or during DNA packaging. This Homo sapiens (Human) protein is Capsid scaffolding protein.